The following is a 609-amino-acid chain: All-trans-retinol 13,14-reductase (609 aa).

Residues 1-21 (MWITALLLVVLLLVVVHRVYV) form the signal peptide.

The protein belongs to the carotenoid/retinoid oxidoreductase family. CrtISO subfamily. It depends on NAD(+) as a cofactor. Requires NADP(+) as cofactor. The cofactor is FAD. As to expression, highly expressed in liver, kidney and heart.

The protein resides in the endoplasmic reticulum membrane. The enzyme catalyses all-trans-13,14-dihydroretinol + A = all-trans-retinol + AH2. In terms of biological role, catalyzes the saturation of all-trans-retinol to all-trans-13,14-dihydroretinol. Does not exhibit any activity toward all-trans-retinoic acid, nor 9-cis, 11-cis or 13-cis-retinol isomers. May play a role in the metabolism of vitamin A. Independently of retinol conversion, may regulate liver metabolism upstream of MLXIPL/ChREBP. May play a role in adipocyte differentiation. The polypeptide is All-trans-retinol 13,14-reductase (Retsat) (Rattus norvegicus (Rat)).